A 156-amino-acid polypeptide reads, in one-letter code: Putative HTH-type transcriptional regulator YffB (156 aa).

Residues 2 to 137 form the HTH rrf2-type domain; that stretch reads KLSSGWEQSV…SNVSLAQVAD (136 aa).

The chain is Putative HTH-type transcriptional regulator YffB (yffB) from Lactococcus lactis subsp. lactis (strain IL1403) (Streptococcus lactis).